A 120-amino-acid chain; its full sequence is Large ribosomal subunit protein bL19 (120 aa).

This sequence belongs to the bacterial ribosomal protein bL19 family.

In terms of biological role, this protein is located at the 30S-50S ribosomal subunit interface and may play a role in the structure and function of the aminoacyl-tRNA binding site. The sequence is that of Large ribosomal subunit protein bL19 from Gloeothece citriformis (strain PCC 7424) (Cyanothece sp. (strain PCC 7424)).